Consider the following 334-residue polypeptide: MDGVIVYCLNALVKHGEEINHIKNDFMIKPCCERVCEKVKNVHIGGQSKNNTVIADLPYMDNAVSDVCNSLYKKNVSRISRFANLIKIDDDDKTPTGVYNYFKPKDVIPVIISIGKDKDVCELLISSDISCACVELNSYKVAILPMDVSFFTKGNASLIILLFDFSIDAAPLLRSVTDNNVIISRHQRLHDELPSSNWFKFYISIKSDYCSILYMVVDGSVMHAIADNRTHAIISKNILDNTTINDECRCCYFEPQIRILDRDEMLNGSSCDMNRHCIMMNLPDVGEFGSSMLGKYEPDMIKIALSVAGNLIRNRDYIPGRRGYSYYVYGIASR.

Belongs to the orthopoxvirus OPG181 family.

This chain is Protein OPG181 (OPG181), found in Vaccinia virus (strain Copenhagen) (VACV).